Consider the following 388-residue polypeptide: Methylthioribose-1-phosphate isomerase (388 aa).

The active-site Proton donor is the aspartate 258.

It belongs to the eIF-2B alpha/beta/delta subunits family. MtnA subfamily.

It is found in the cytoplasm. Its subcellular location is the nucleus. The enzyme catalyses 5-(methylsulfanyl)-alpha-D-ribose 1-phosphate = 5-(methylsulfanyl)-D-ribulose 1-phosphate. It functions in the pathway amino-acid biosynthesis; L-methionine biosynthesis via salvage pathway; L-methionine from S-methyl-5-thio-alpha-D-ribose 1-phosphate: step 1/6. In terms of biological role, catalyzes the interconversion of methylthioribose-1-phosphate (MTR-1-P) into methylthioribulose-1-phosphate (MTRu-1-P). The chain is Methylthioribose-1-phosphate isomerase (mri-1) from Neurospora crassa (strain ATCC 24698 / 74-OR23-1A / CBS 708.71 / DSM 1257 / FGSC 987).